Here is a 338-residue protein sequence, read N- to C-terminus: Ferredoxin--NADP reductase (338 aa).

FAD is bound by residues Asp38, Gln46, Tyr51, Val91, Phe125, Asp291, and Thr331.

This sequence belongs to the ferredoxin--NADP reductase type 2 family. As to quaternary structure, homodimer. It depends on FAD as a cofactor.

The enzyme catalyses 2 reduced [2Fe-2S]-[ferredoxin] + NADP(+) + H(+) = 2 oxidized [2Fe-2S]-[ferredoxin] + NADPH. In Orientia tsutsugamushi (strain Boryong) (Rickettsia tsutsugamushi), this protein is Ferredoxin--NADP reductase.